A 963-amino-acid chain; its full sequence is Exportin-T (963 aa).

Methionine 1 carries the post-translational modification N-acetylmethionine. At lysine 635 the chain carries N6-acetyllysine.

Belongs to the exportin family. In terms of assembly, found in a complex with XPOT, Ran and tRNA. Probably found in a complex with nucleoporins. Interacts with Ran and tRNA in a GTP-dependent manner.

Its subcellular location is the nucleus. The protein localises to the cytoplasm. Its function is as follows. Mediates the nuclear export of aminoacylated tRNAs. In the nucleus binds to tRNA and to the GTPase Ran in its active GTP-bound form. Docking of this trimeric complex to the nuclear pore complex (NPC) is mediated through binding to nucleoporins. Upon transit of a nuclear export complex into the cytoplasm, disassembling of the complex and hydrolysis of Ran-GTP to Ran-GDP (induced by RANBP1 and RANGAP1, respectively) cause release of the tRNA from the export receptor. XPOT then return to the nuclear compartment and mediate another round of transport. The directionality of nuclear export is thought to be conferred by an asymmetric distribution of the GTP- and GDP-bound forms of Ran between the cytoplasm and nucleus. The protein is Exportin-T (Xpot) of Mus musculus (Mouse).